The primary structure comprises 76 residues: NADH-ubiquinone oxidoreductase chain 4L (76 aa).

Transmembrane regions (helical) follow at residues 1–21 (MTPV…GLAF), 29–49 (ALLC…LWAL), and 56–76 (YSVA…AGLA).

This sequence belongs to the complex I subunit 4L family.

The protein resides in the mitochondrion membrane. It carries out the reaction a ubiquinone + NADH + 5 H(+)(in) = a ubiquinol + NAD(+) + 4 H(+)(out). Its function is as follows. Core subunit of the mitochondrial membrane respiratory chain NADH dehydrogenase (Complex I) which catalyzes electron transfer from NADH through the respiratory chain, using ubiquinone as an electron acceptor. Part of the enzyme membrane arm which is embedded in the lipid bilayer and involved in proton translocation. This chain is NADH-ubiquinone oxidoreductase chain 4L (MT-ND4L), found in Oncorhynchus masou (Cherry salmon).